The primary structure comprises 356 residues: UDP-N-acetylglucosamine--N-acetylmuramyl-(pentapeptide) pyrophosphoryl-undecaprenol N-acetylglucosamine transferase (356 aa).

UDP-N-acetyl-alpha-D-glucosamine is bound by residues 15-17, Asn-127, Arg-163, Ser-191, Ile-244, 263-268, and Gln-288; these read TGG and ALTVSE.

This sequence belongs to the glycosyltransferase 28 family. MurG subfamily.

It is found in the cell inner membrane. It catalyses the reaction di-trans,octa-cis-undecaprenyl diphospho-N-acetyl-alpha-D-muramoyl-L-alanyl-D-glutamyl-meso-2,6-diaminopimeloyl-D-alanyl-D-alanine + UDP-N-acetyl-alpha-D-glucosamine = di-trans,octa-cis-undecaprenyl diphospho-[N-acetyl-alpha-D-glucosaminyl-(1-&gt;4)]-N-acetyl-alpha-D-muramoyl-L-alanyl-D-glutamyl-meso-2,6-diaminopimeloyl-D-alanyl-D-alanine + UDP + H(+). Its pathway is cell wall biogenesis; peptidoglycan biosynthesis. Cell wall formation. Catalyzes the transfer of a GlcNAc subunit on undecaprenyl-pyrophosphoryl-MurNAc-pentapeptide (lipid intermediate I) to form undecaprenyl-pyrophosphoryl-MurNAc-(pentapeptide)GlcNAc (lipid intermediate II). The chain is UDP-N-acetylglucosamine--N-acetylmuramyl-(pentapeptide) pyrophosphoryl-undecaprenol N-acetylglucosamine transferase from Yersinia pestis bv. Antiqua (strain Antiqua).